We begin with the raw amino-acid sequence, 459 residues long: Ribulose bisphosphate carboxylase (459 aa).

Asparagine 111 is a substrate binding site. The active-site Proton acceptor is lysine 166. Lysine 168 contributes to the substrate binding site. Positions 191, 193, and 194 each coordinate Mg(2+). The residue at position 191 (lysine 191) is an N6-carboxylysine. Histidine 287 (proton acceptor) is an active-site residue. Substrate is bound by residues arginine 288, histidine 321, and serine 368.

This sequence belongs to the RuBisCO large chain family. Type II subfamily. As to quaternary structure, homodimer. Mg(2+) serves as cofactor.

The catalysed reaction is 2 (2R)-3-phosphoglycerate + 2 H(+) = D-ribulose 1,5-bisphosphate + CO2 + H2O. The enzyme catalyses D-ribulose 1,5-bisphosphate + O2 = 2-phosphoglycolate + (2R)-3-phosphoglycerate + 2 H(+). Its function is as follows. RuBisCO catalyzes two reactions: the carboxylation of D-ribulose 1,5-bisphosphate, the primary event in carbon dioxide fixation, as well as the oxidative fragmentation of the pentose substrate. Both reactions occur simultaneously and in competition at the same active site. This is Ribulose bisphosphate carboxylase from Polaromonas naphthalenivorans (strain CJ2).